Reading from the N-terminus, the 208-residue chain is Uracil phosphoribosyltransferase (208 aa).

Residues Arg78, Arg103, and 130-138 contribute to the 5-phospho-alpha-D-ribose 1-diphosphate site; that span reads DPMLATGGS. Residues Ile193 and 198 to 200 each bind uracil; that span reads GDA. Asp199 is a 5-phospho-alpha-D-ribose 1-diphosphate binding site.

It belongs to the UPRTase family. The cofactor is Mg(2+).

It catalyses the reaction UMP + diphosphate = 5-phospho-alpha-D-ribose 1-diphosphate + uracil. Its pathway is pyrimidine metabolism; UMP biosynthesis via salvage pathway; UMP from uracil: step 1/1. Its activity is regulated as follows. Allosterically activated by GTP. Catalyzes the conversion of uracil and 5-phospho-alpha-D-ribose 1-diphosphate (PRPP) to UMP and diphosphate. This is Uracil phosphoribosyltransferase from Neisseria meningitidis serogroup B (strain ATCC BAA-335 / MC58).